Here is a 134-residue protein sequence, read N- to C-terminus: MIEVGEYKIKEGLYYTKEHEWVQVLEDGTVLVGITDYAQKELGDLAYVELPEVGKVVEKGDVLCEVESVKAVSEVYAPVSGEVIEVNEELADSPEKINEDPYEAWIAKIKPKNLEEELKELMDAKAYAEYLKTL.

The Lipoyl-binding domain occupies 29 to 110; sequence TVLVGITDYA…PYEAWIAKIK (82 aa). Residue K70 is modified to N6-lipoyllysine.

The protein belongs to the GcvH family. As to quaternary structure, the glycine cleavage system is composed of four proteins: P, T, L and H. The cofactor is (R)-lipoate.

The glycine cleavage system catalyzes the degradation of glycine. The H protein shuttles the methylamine group of glycine from the P protein to the T protein. The polypeptide is Probable glycine cleavage system H protein (Pyrococcus furiosus (strain ATCC 43587 / DSM 3638 / JCM 8422 / Vc1)).